A 294-amino-acid chain; its full sequence is Acetylglutamate kinase (294 aa).

Substrate-binding positions include Gly66 to Gly67, Arg88, and Asn193.

Belongs to the acetylglutamate kinase family. ArgB subfamily.

It localises to the cytoplasm. It carries out the reaction N-acetyl-L-glutamate + ATP = N-acetyl-L-glutamyl 5-phosphate + ADP. Its pathway is amino-acid biosynthesis; L-arginine biosynthesis; N(2)-acetyl-L-ornithine from L-glutamate: step 2/4. Its function is as follows. Catalyzes the ATP-dependent phosphorylation of N-acetyl-L-glutamate. In Agrobacterium fabrum (strain C58 / ATCC 33970) (Agrobacterium tumefaciens (strain C58)), this protein is Acetylglutamate kinase.